A 489-amino-acid chain; its full sequence is Bifunctional protein HldE (489 aa).

The tract at residues Met1–Pro328 is ribokinase. Asn206–Glu209 serves as a coordination point for ATP. Asp276 is an active-site residue. The interval Leu357–Gly489 is cytidylyltransferase.

In the N-terminal section; belongs to the carbohydrate kinase PfkB family. The protein in the C-terminal section; belongs to the cytidylyltransferase family. In terms of assembly, homodimer.

It carries out the reaction D-glycero-beta-D-manno-heptose 7-phosphate + ATP = D-glycero-beta-D-manno-heptose 1,7-bisphosphate + ADP + H(+). The enzyme catalyses D-glycero-beta-D-manno-heptose 1-phosphate + ATP + H(+) = ADP-D-glycero-beta-D-manno-heptose + diphosphate. It functions in the pathway nucleotide-sugar biosynthesis; ADP-L-glycero-beta-D-manno-heptose biosynthesis; ADP-L-glycero-beta-D-manno-heptose from D-glycero-beta-D-manno-heptose 7-phosphate: step 1/4. It participates in nucleotide-sugar biosynthesis; ADP-L-glycero-beta-D-manno-heptose biosynthesis; ADP-L-glycero-beta-D-manno-heptose from D-glycero-beta-D-manno-heptose 7-phosphate: step 3/4. Catalyzes the phosphorylation of D-glycero-D-manno-heptose 7-phosphate at the C-1 position to selectively form D-glycero-beta-D-manno-heptose-1,7-bisphosphate. Functionally, catalyzes the ADP transfer from ATP to D-glycero-beta-D-manno-heptose 1-phosphate, yielding ADP-D-glycero-beta-D-manno-heptose. The protein is Bifunctional protein HldE of Desulfatibacillum aliphaticivorans.